We begin with the raw amino-acid sequence, 223 residues long: Carnitine transport permease protein OpuCD (223 aa).

Positions 22-202 (FWRHFLMSAY…VMAILADVLL (181 aa)) constitute an ABC transmembrane type-1 domain. 5 helical membrane-spanning segments follow: residues 27–47 (LMSA…GVYI), 63–83 (IIQT…MGLG), 87–107 (VVLS…YTGI), 148–168 (ALVI…GGLG), and 182–202 (AIIL…DVLL).

It belongs to the binding-protein-dependent transport system permease family. In terms of assembly, the complex is composed of two ATP-binding proteins (OpuCA), two transmembrane proteins (OpuCB and OpuCD) and a solute-binding protein (OpuCC).

The protein resides in the cell membrane. Part of the ABC transporter complex OpuCABCD involved in carnitine uptake. Probably responsible for the translocation of the substrate across the membrane. Involved, with BetL and GbuABC, in osmoprotection and cryoprotection of Listeria. Can also mediate weak glycine betaine transport. The polypeptide is Carnitine transport permease protein OpuCD (opuCD) (Listeria monocytogenes serotype 1/2a (strain 10403S)).